Here is a 79-residue protein sequence, read N- to C-terminus: Pyridoxal 5'-phosphate synthase PDX1-like 4 (79 aa).

It belongs to the PdxS/SNZ family.

This is Pyridoxal 5'-phosphate synthase PDX1-like 4 (PDX1L4) from Arabidopsis thaliana (Mouse-ear cress).